The primary structure comprises 233 residues: MNTEEIINLIANSKKKNPLKVYLKGNLKEVDFSNVEFYGNDEFGILFCEEEDFKTIYETYKDSIINYRIERDRKNSAIPLADLSKYNARIEPGAIIRDLVEIGDGCVIMMGAVINIGACIKENTMIDMNVVIGGRAQIGKNCHIGAGAVIAGVIEPPSAQPVVIENNVLIGANAVVLEGVKVGQGSIIGAGSVVISDVEPYSVVAGVPAKFIKKVDDKTKAKTQLVEGLRKLK.

It belongs to the transferase hexapeptide repeat family. DapH subfamily.

The enzyme catalyses (S)-2,3,4,5-tetrahydrodipicolinate + acetyl-CoA + H2O = L-2-acetamido-6-oxoheptanedioate + CoA. It participates in amino-acid biosynthesis; L-lysine biosynthesis via DAP pathway; LL-2,6-diaminopimelate from (S)-tetrahydrodipicolinate (acetylase route): step 1/3. Functionally, catalyzes the transfer of an acetyl group from acetyl-CoA to tetrahydrodipicolinate. The sequence is that of 2,3,4,5-tetrahydropyridine-2,6-dicarboxylate N-acetyltransferase from Petrotoga mobilis (strain DSM 10674 / SJ95).